Reading from the N-terminus, the 361-residue chain is tRNA 2-selenouridine synthase (361 aa).

Residues 11–134 (LLADTPLIDV…LRQTAIQATW (124 aa)) form the Rhodanese domain. The active-site S-selanylcysteine intermediate is C94.

This sequence belongs to the SelU family. Monomer.

The catalysed reaction is 5-methylaminomethyl-2-thiouridine(34) in tRNA + selenophosphate + (2E)-geranyl diphosphate + H2O + H(+) = 5-methylaminomethyl-2-selenouridine(34) in tRNA + (2E)-thiogeraniol + phosphate + diphosphate. It catalyses the reaction 5-methylaminomethyl-2-thiouridine(34) in tRNA + (2E)-geranyl diphosphate = 5-methylaminomethyl-S-(2E)-geranyl-thiouridine(34) in tRNA + diphosphate. It carries out the reaction 5-methylaminomethyl-S-(2E)-geranyl-thiouridine(34) in tRNA + selenophosphate + H(+) = 5-methylaminomethyl-2-(Se-phospho)selenouridine(34) in tRNA + (2E)-thiogeraniol. The enzyme catalyses 5-methylaminomethyl-2-(Se-phospho)selenouridine(34) in tRNA + H2O = 5-methylaminomethyl-2-selenouridine(34) in tRNA + phosphate. In terms of biological role, involved in the post-transcriptional modification of the uridine at the wobble position (U34) of tRNA(Lys), tRNA(Glu) and tRNA(Gln). Catalyzes the conversion of 2-thiouridine (S2U-RNA) to 2-selenouridine (Se2U-RNA). Acts in a two-step process involving geranylation of 2-thiouridine (S2U) to S-geranyl-2-thiouridine (geS2U) and subsequent selenation of the latter derivative to 2-selenouridine (Se2U) in the tRNA chain. The polypeptide is tRNA 2-selenouridine synthase (Salmonella schwarzengrund (strain CVM19633)).